The primary structure comprises 517 residues: Light-independent protochlorophyllide reductase subunit B (517 aa).

Asp-36 lines the [4Fe-4S] cluster pocket. Catalysis depends on Asp-285, which acts as the Proton donor. 420–421 (GL) is a binding site for substrate.

It belongs to the ChlB/BchB/BchZ family. In terms of assembly, protochlorophyllide reductase is composed of three subunits; BchL, BchN and BchB. Forms a heterotetramer of two BchB and two BchN subunits. [4Fe-4S] cluster serves as cofactor.

The catalysed reaction is chlorophyllide a + oxidized 2[4Fe-4S]-[ferredoxin] + 2 ADP + 2 phosphate = protochlorophyllide a + reduced 2[4Fe-4S]-[ferredoxin] + 2 ATP + 2 H2O. Its pathway is porphyrin-containing compound metabolism; bacteriochlorophyll biosynthesis (light-independent). Component of the dark-operative protochlorophyllide reductase (DPOR) that uses Mg-ATP and reduced ferredoxin to reduce ring D of protochlorophyllide (Pchlide) to form chlorophyllide a (Chlide). This reaction is light-independent. The NB-protein (BchN-BchB) is the catalytic component of the complex. This Bradyrhizobium sp. (strain BTAi1 / ATCC BAA-1182) protein is Light-independent protochlorophyllide reductase subunit B.